We begin with the raw amino-acid sequence, 278 residues long: 4-hydroxy-tetrahydrodipicolinate reductase (278 aa).

NAD(+)-binding positions include 13-18 (GAAGKM) and 111-113 (GTT). His167 functions as the Proton donor/acceptor in the catalytic mechanism. (S)-2,3,4,5-tetrahydrodipicolinate is bound at residue His168. Catalysis depends on Lys171, which acts as the Proton donor. 177 to 178 (GT) provides a ligand contact to (S)-2,3,4,5-tetrahydrodipicolinate.

This sequence belongs to the DapB family.

Its subcellular location is the cytoplasm. It carries out the reaction (S)-2,3,4,5-tetrahydrodipicolinate + NAD(+) + H2O = (2S,4S)-4-hydroxy-2,3,4,5-tetrahydrodipicolinate + NADH + H(+). The catalysed reaction is (S)-2,3,4,5-tetrahydrodipicolinate + NADP(+) + H2O = (2S,4S)-4-hydroxy-2,3,4,5-tetrahydrodipicolinate + NADPH + H(+). It functions in the pathway amino-acid biosynthesis; L-lysine biosynthesis via DAP pathway; (S)-tetrahydrodipicolinate from L-aspartate: step 4/4. Catalyzes the conversion of 4-hydroxy-tetrahydrodipicolinate (HTPA) to tetrahydrodipicolinate. This Mastigocladus laminosus (Fischerella sp.) protein is 4-hydroxy-tetrahydrodipicolinate reductase.